The primary structure comprises 332 residues: Mitoferrin-1 (332 aa).

3 Solcar repeats span residues 31 to 119 (ASLG…IKRS), 129 to 213 (NSHI…MQEH), and 220 to 314 (YRPE…FKYF). 6 helical membrane-spanning segments follow: residues 33–52 (LGTH…TVMY), 94–113 (GLNI…FACY), 131–150 (HIAN…AVMN), 188–207 (SYST…FITY), 222–241 (PETH…AVTT), and 289–308 (GIQA…WSVY).

Belongs to the mitochondrial carrier (TC 2.A.29) family. In terms of tissue distribution, highly expressed in hematopoietic organs, Expressed in the intermediate cell mass (ICM), a tissue equivalent to the mammalian extraembryonic yolk-sac blood islands. Colocalizes with gata1.

It is found in the mitochondrion inner membrane. The enzyme catalyses Fe(2+)(in) = Fe(2+)(out). Its function is as follows. Mitochondrial iron transporter that specifically mediates iron uptake in developing erythroid cells, thereby playing an essential role in heme biosynthesis. This is Mitoferrin-1 (slc25a37) from Danio rerio (Zebrafish).